The chain runs to 369 residues: tRNA(Met) cytidine acetate ligase (369 aa).

ATP contacts are provided by residues 7-20, Gly-96, Asn-152, and Arg-175; that span reads VAEF…HKYL.

The protein belongs to the TmcAL family.

The protein resides in the cytoplasm. The catalysed reaction is cytidine(34) in elongator tRNA(Met) + acetate + ATP = N(4)-acetylcytidine(34) in elongator tRNA(Met) + AMP + diphosphate. Its function is as follows. Catalyzes the formation of N(4)-acetylcytidine (ac(4)C) at the wobble position of elongator tRNA(Met), using acetate and ATP as substrates. First activates an acetate ion to form acetyladenylate (Ac-AMP) and then transfers the acetyl group to tRNA to form ac(4)C34. The chain is tRNA(Met) cytidine acetate ligase from Streptococcus agalactiae serotype Ia (strain ATCC 27591 / A909 / CDC SS700).